Reading from the N-terminus, the 620-residue chain is Sorbicillinoid biosynthetic cluster transcription factor 1 (620 aa).

The zn(2)-C6 fungal-type DNA-binding region spans 10 to 37 (CEECRRRKARCDRVRPQCGICADAGRTC). Residues 285–308 (HDDETSPNENSGSCPSVSPSTTQN) are disordered. Positions 291 to 308 (PNENSGSCPSVSPSTTQN) are enriched in polar residues.

It localises to the nucleus. Functionally, transcription factor that acts as the main regulator of the gene cluster that mediates the biosynthesis of sorbicillinoids, a diverse group of yellow secondary metabolites that restrict growth of competing pathogenic fungi but not of bacteria. This chain is Sorbicillinoid biosynthetic cluster transcription factor 1, found in Penicillium rubens (strain ATCC 28089 / DSM 1075 / NRRL 1951 / Wisconsin 54-1255) (Penicillium chrysogenum).